The following is a 169-amino-acid chain: ATP synthase subunit b (169 aa).

A helical transmembrane segment spans residues 11–31 (KLPLGNMLFIIISFLVLMVIL).

It belongs to the ATPase B chain family. F-type ATPases have 2 components, F(1) - the catalytic core - and F(0) - the membrane proton channel. F(1) has five subunits: alpha(3), beta(3), gamma(1), delta(1), epsilon(1). F(0) has three main subunits: a(1), b(2) and c(10-14). The alpha and beta chains form an alternating ring which encloses part of the gamma chain. F(1) is attached to F(0) by a central stalk formed by the gamma and epsilon chains, while a peripheral stalk is formed by the delta and b chains.

It is found in the cell membrane. Functionally, f(1)F(0) ATP synthase produces ATP from ADP in the presence of a proton or sodium gradient. F-type ATPases consist of two structural domains, F(1) containing the extramembraneous catalytic core and F(0) containing the membrane proton channel, linked together by a central stalk and a peripheral stalk. During catalysis, ATP synthesis in the catalytic domain of F(1) is coupled via a rotary mechanism of the central stalk subunits to proton translocation. In terms of biological role, component of the F(0) channel, it forms part of the peripheral stalk, linking F(1) to F(0). The chain is ATP synthase subunit b from Leuconostoc citreum (strain KM20).